The primary structure comprises 335 residues: DNA polymerase beta (335 aa).

Lysine 41 participates in a covalent cross-link: Glycyl lysine isopeptide (Lys-Gly) (interchain with G-Cter in ubiquitin). A K(+)-binding site is contributed by lysine 60. Residue lysine 60 participates in Na(+) binding. A Glycyl lysine isopeptide (Lys-Gly) (interchain with G-Cter in ubiquitin) cross-link involves residue lysine 61. K(+) is bound by residues leucine 62 and valine 65. Na(+) contacts are provided by leucine 62 and valine 65. The Nucleophile; Schiff-base intermediate with DNA; for 5'-dRP lyase activity role is filled by lysine 72. At lysine 72 the chain carries N6-acetyllysine. Residue lysine 81 forms a Glycyl lysine isopeptide (Lys-Gly) (interchain with G-Cter in ubiquitin) linkage. Arginine 83 is subject to Omega-N-methylarginine; by PRMT6. K(+) contacts are provided by threonine 101, valine 103, and isoleucine 106. Na(+) is bound by residues threonine 101, valine 103, and isoleucine 106. Position 149 (arginine 149) interacts with a 2'-deoxyribonucleoside 5'-triphosphate. Position 152 is an omega-N-methylarginine; by PRMT6 (arginine 152). Residues serine 180, arginine 183, glycine 189, and aspartate 190 each coordinate a 2'-deoxyribonucleoside 5'-triphosphate. The tract at residues 183-192 is DNA-binding; sequence RGAESSGDMD. Residues aspartate 190, aspartate 192, and aspartate 256 each coordinate Mg(2+).

The protein belongs to the DNA polymerase type-X family. Monomer. Binds single-stranded DNA (ssDNA). Interacts with APEX1, LIG1, LIG3, FEN1, PCNA and XRCC1. Interacts with HUWE1/ARF-BP1, STUB1/CHIP and USP47. Interacts with FAM168A. Mg(2+) serves as cofactor. Methylation by PRMT6 stimulates the polymerase activity by enhancing DNA binding and processivity. In terms of processing, ubiquitinated at Lys-41, Lys-61 and Lys-81: monoubiquitinated by HUWE1/ARF-BP1. Monoubiquitinated protein is then the target of STUB1/CHIP, which catalyzes polyubiquitination from monoubiquitin, leading to degradation by the proteasome. USP47 mediates the deubiquitination of monoubiquitinated protein, preventing polyubiquitination by STUB1/CHIP and its subsequent degradation.

The protein localises to the nucleus. The protein resides in the cytoplasm. The enzyme catalyses DNA(n) + a 2'-deoxyribonucleoside 5'-triphosphate = DNA(n+1) + diphosphate. The catalysed reaction is a 5'-end 2'-deoxyribose-2'-deoxyribonucleotide-DNA = (2E,4S)-4-hydroxypenten-2-al-5-phosphate + a 5'-end 5'-phospho-2'-deoxyribonucleoside-DNA + H(+). It carries out the reaction 2'-deoxyribonucleotide-(2'-deoxyribose 5'-phosphate)-2'-deoxyribonucleotide-DNA = a 3'-end 2'-deoxyribonucleotide-(2,3-dehydro-2,3-deoxyribose 5'-phosphate)-DNA + a 5'-end 5'-phospho-2'-deoxyribonucleoside-DNA + H(+). In terms of biological role, repair polymerase that plays a key role in base-excision repair. During this process, the damaged base is excised by specific DNA glycosylases, the DNA backbone is nicked at the abasic site by an apurinic/apyrimidic (AP) endonuclease, and POLB removes 5'-deoxyribose-phosphate from the preincised AP site acting as a 5'-deoxyribose-phosphate lyase (5'-dRP lyase); through its DNA polymerase activity, it adds one nucleotide to the 3' end of the arising single-nucleotide gap. Conducts 'gap-filling' DNA synthesis in a stepwise distributive fashion rather than in a processive fashion as for other DNA polymerases. It is also able to cleave sugar-phosphate bonds 3' to an intact AP site, acting as an AP lyase. This chain is DNA polymerase beta (Polb), found in Mus musculus (Mouse).